A 125-amino-acid chain; its full sequence is uncharacterized protein (125 aa).

The N-terminal 46 residues, 1 to 46 (MFFDTKVLNYPTIHKSISMASTMQRTSSSAASNERQLSQLQRRAPS), are a transit peptide targeting the chloroplast.

The protein resides in the plastid. It localises to the chloroplast. This is an uncharacterized protein from Arabidopsis thaliana (Mouse-ear cress).